The chain runs to 449 residues: Elongation factor 1-alpha (449 aa).

One can recognise a tr-type G domain in the interval 5-230; the sequence is KVHINIVVIG…DQINEPKRPS (226 aa). The G1 stretch occupies residues 14 to 21; that stretch reads GHVDSGKS. 14-21 is a GTP binding site; that stretch reads GHVDSGKS. Position 55 is an N6,N6-dimethyllysine (K55). Positions 70 to 74 are G2; it reads GITID. K79 is modified (N6,N6,N6-trimethyllysine). The segment at 91–94 is G3; it reads DAPG. GTP-binding positions include 91–95 and 153–156; these read DAPGH and NKMD. The segment at 153-156 is G4; the sequence is NKMD. K187 carries the N6,N6,N6-trimethyllysine modification. Residues 194 to 196 are G5; that stretch reads SGF. An N6-methyllysine modification is found at K261. E289 is modified (5-glutamyl glycerylphosphorylethanolamine). The residue at position 306 (K306) is an N6,N6,N6-trimethyllysine. Residue E362 is modified to 5-glutamyl glycerylphosphorylethanolamine. N6,N6,N6-trimethyllysine is present on K396.

The protein belongs to the TRAFAC class translation factor GTPase superfamily. Classic translation factor GTPase family. EF-Tu/EF-1A subfamily.

Its subcellular location is the cytoplasm. Its function is as follows. This protein promotes the GTP-dependent binding of aminoacyl-tRNA to the A-site of ribosomes during protein biosynthesis. This Daucus carota (Wild carrot) protein is Elongation factor 1-alpha.